The sequence spans 949 residues: Translation initiation factor IF-2 (949 aa).

3 disordered regions span residues 54-183 (FLKP…EAAP), 217-288 (LPAA…EVAL), and 305-357 (EVVA…EMQA). 2 stretches are compositionally biased toward basic and acidic residues: residues 67–92 (DQEKPEEIEEKKEAPKSPKRGEERHI) and 101–164 (IEAK…EEAA). Composition is skewed to low complexity over residues 165-183 (RAAAAAPAAPVAAPAEAAP) and 217-228 (LPAAAPAAPSAP). Basic and acidic residues-rich tracts occupy residues 235 to 288 (PVEE…EVAL) and 330 to 339 (KYQDNEDRLQ). In terms of domain architecture, tr-type G spans 445 to 619 (TRPPVITVMG…EMLNLQSNPT (175 aa)). The G1 stretch occupies residues 454–461 (GHVDHGKT). 454-461 (GHVDHGKT) provides a ligand contact to GTP. Positions 479-483 (GITQH) are G2. The tract at residues 501 to 504 (DTPG) is G3. Residues 501–505 (DTPGH) and 555–558 (NKID) contribute to the GTP site. The G4 stretch occupies residues 555–558 (NKID). The G5 stretch occupies residues 591–593 (SAK).

It belongs to the TRAFAC class translation factor GTPase superfamily. Classic translation factor GTPase family. IF-2 subfamily.

It localises to the cytoplasm. One of the essential components for the initiation of protein synthesis. Protects formylmethionyl-tRNA from spontaneous hydrolysis and promotes its binding to the 30S ribosomal subunits. Also involved in the hydrolysis of GTP during the formation of the 70S ribosomal complex. This is Translation initiation factor IF-2 from Magnetococcus marinus (strain ATCC BAA-1437 / JCM 17883 / MC-1).